The sequence spans 887 residues: Ubiquitin carboxyl-terminal hydrolase 4 (887 aa).

Residues 202-328 form the Rhodanese domain; it reads KEDSLLLIDV…WIKNGGEIDK (127 aa). Disordered regions lie at residues 358–465 and 484–505; these read AFPD…PKPP and QKQNRSRSLEPQLPPIPSTLIR. Polar residues predominate over residues 387–402; sequence TPPNGSSTLGRINSPV. The region spanning 525–885 is the USP domain; sequence VGLENMGNSC…SAYVLFYHRI (361 aa). Cys-534 serves as the catalytic Nucleophile. The active-site Proton acceptor is the His-842.

It belongs to the peptidase C19 family.

It is found in the cytoplasm. Its subcellular location is the late endosome membrane. It carries out the reaction Thiol-dependent hydrolysis of ester, thioester, amide, peptide and isopeptide bonds formed by the C-terminal Gly of ubiquitin (a 76-residue protein attached to proteins as an intracellular targeting signal).. Its activity is regulated as follows. RFU1 is an inhibitor of deubiquitination activity. Functionally, ubiquitin thioesterase that acts at the late endosome/prevacuolar compartment to recover ubiquitin from ubiquitinated membrane proteins en route to the vacuole. Also removes ubiquitin from soluble proteins targeted to proteasomes. Is essential to maintain a normal level of free ubiquitin. Required for promoting coordination of DNA replication and avoids DNA overreplication. The chain is Ubiquitin carboxyl-terminal hydrolase 4 (DOA4) from Candida glabrata (strain ATCC 2001 / BCRC 20586 / JCM 3761 / NBRC 0622 / NRRL Y-65 / CBS 138) (Yeast).